Consider the following 414-residue polypeptide: Serine hydroxymethyltransferase (414 aa).

(6S)-5,6,7,8-tetrahydrofolate contacts are provided by residues Leu121 and 125–127; that span reads GHL. N6-(pyridoxal phosphate)lysine is present on Lys229.

It belongs to the SHMT family. In terms of assembly, homodimer. It depends on pyridoxal 5'-phosphate as a cofactor.

It localises to the cytoplasm. The enzyme catalyses (6R)-5,10-methylene-5,6,7,8-tetrahydrofolate + glycine + H2O = (6S)-5,6,7,8-tetrahydrofolate + L-serine. It participates in one-carbon metabolism; tetrahydrofolate interconversion. It functions in the pathway amino-acid biosynthesis; glycine biosynthesis; glycine from L-serine: step 1/1. Catalyzes the reversible interconversion of serine and glycine with tetrahydrofolate (THF) serving as the one-carbon carrier. This reaction serves as the major source of one-carbon groups required for the biosynthesis of purines, thymidylate, methionine, and other important biomolecules. Also exhibits THF-independent aldolase activity toward beta-hydroxyamino acids, producing glycine and aldehydes, via a retro-aldol mechanism. The protein is Serine hydroxymethyltransferase of Verminephrobacter eiseniae (strain EF01-2).